A 246-amino-acid chain; its full sequence is tRNA pseudouridine synthase A (246 aa).

The Nucleophile role is filled by D52. A substrate-binding site is contributed by Y111.

It belongs to the tRNA pseudouridine synthase TruA family. In terms of assembly, homodimer.

The enzyme catalyses uridine(38/39/40) in tRNA = pseudouridine(38/39/40) in tRNA. In terms of biological role, formation of pseudouridine at positions 38, 39 and 40 in the anticodon stem and loop of transfer RNAs. This Borreliella afzelii (strain PKo) (Borrelia afzelii) protein is tRNA pseudouridine synthase A.